The following is a 438-amino-acid chain: 3-phosphoshikimate 1-carboxyvinyltransferase (438 aa).

3-phosphoshikimate is bound by residues Lys26, Ser27, and Arg31. Lys26 is a binding site for phosphoenolpyruvate. Phosphoenolpyruvate contacts are provided by Gly99 and Arg127. 3-phosphoshikimate is bound by residues Ser172, Gln174, Asp320, and Lys347. Residue Gln174 coordinates phosphoenolpyruvate. The active-site Proton acceptor is the Asp320. The phosphoenolpyruvate site is built by Arg351 and Arg392.

This sequence belongs to the EPSP synthase family. Monomer.

The protein resides in the cytoplasm. The catalysed reaction is 3-phosphoshikimate + phosphoenolpyruvate = 5-O-(1-carboxyvinyl)-3-phosphoshikimate + phosphate. The protein operates within metabolic intermediate biosynthesis; chorismate biosynthesis; chorismate from D-erythrose 4-phosphate and phosphoenolpyruvate: step 6/7. Catalyzes the transfer of the enolpyruvyl moiety of phosphoenolpyruvate (PEP) to the 5-hydroxyl of shikimate-3-phosphate (S3P) to produce enolpyruvyl shikimate-3-phosphate and inorganic phosphate. The protein is 3-phosphoshikimate 1-carboxyvinyltransferase of Xanthomonas campestris pv. campestris (strain 8004).